The primary structure comprises 571 residues: MTRISRSAYAEIYGPTVVGGVGDRVRLADTLLLAEVEKDHTIFGEEVKFGGGKVIRDGMGQSQRLATDCVDTVITNALIIDAVTGIVKADIGIKDGLISGIGKAGNPDTQPGVTIIIGASTEVVAGEGLIVTAGAIDTHIHFICPQQIEEALATGTTTMIGGGTGPATGSLATTSTSGPWHMAAMLQALDAFPVNVGLFGKGSSSSHGALLEQVRAGAMGLKIHEDWASTPASIDTCLNVAEETDIQVAIHSDTLNESGFVEDTFAAFKGRTIHSFHTEGAGGGHAPDIIRAAGMPNVLPASTNPTMPFTRNTIDEHLDMVMVCHHLDPSIAEDLAFAESRIRRETIAAEDILHDLGAFSIMSSDSQAMGRVGEIVLRTWQTAHKMKLQRGPLQGDSERSDNERIKRYIAKYTINPAVAHGIAHLVGSVEVGKLADLVLWKPAFFGVKVNMVLKSGMAVSASIGDMGASISTPQPVQIRPMWGSHGKALRTSVAFVSQVSLSNPAVSELELNKRLEAVRGCRGVTKHDMVRNNWLPAISVDPQTYQVYADGQLLRCEALAELPMAQRYFLF.

In terms of domain architecture, Urease spans 134–571 (GAIDTHIHFI…LPMAQRYFLF (438 aa)). Residues H139, H141, and K222 each coordinate Ni(2+). K222 bears the N6-carboxylysine mark. H224 is a substrate binding site. Ni(2+)-binding residues include H251 and H277. H325 functions as the Proton donor in the catalytic mechanism. D365 is a binding site for Ni(2+).

It belongs to the metallo-dependent hydrolases superfamily. Urease alpha subunit family. As to quaternary structure, heterotrimer of UreA (gamma), UreB (beta) and UreC (alpha) subunits. Three heterotrimers associate to form the active enzyme. Ni cation serves as cofactor. In terms of processing, carboxylation allows a single lysine to coordinate two nickel ions.

The protein localises to the cytoplasm. It catalyses the reaction urea + 2 H2O + H(+) = hydrogencarbonate + 2 NH4(+). The protein operates within nitrogen metabolism; urea degradation; CO(2) and NH(3) from urea (urease route): step 1/1. This is Urease subunit alpha from Bordetella parapertussis (strain 12822 / ATCC BAA-587 / NCTC 13253).